Here is a 283-residue protein sequence, read N- to C-terminus: Non-selective voltage-gated ion channel VDAC3 (283 aa).

At Cys2 the chain carries N-acetylcysteine. Thr4 bears the Phosphothreonine mark. Lys12, Lys15, and Lys20 each carry N6-acetyllysine. 2 consecutive transmembrane segments (beta stranded) span residues 26-35 (MVKIDLKTKS) and 39-47 (VEFSTSGHA). Glycyl lysine isopeptide (Lys-Gly) (interchain with G-Cter in ubiquitin) cross-links involve residues Lys53 and Lys61. The next 3 beta stranded transmembrane spans lie at 54-64 (ASGNLETKYKV), 69-76 (LTFTQKWN), and 80-89 (TLGTEISWEN). The residue at position 90 (Lys90) is an N6-acetyllysine. A beta stranded transmembrane segment spans residues 95 to 104 (LKLTLDTIFV). Residues Lys109 and Lys110 each participate in a glycyl lysine isopeptide (Lys-Gly) (interchain with G-Cter in ubiquitin) cross-link. Beta stranded transmembrane passes span 111 to 120 (SGKLKASYKR), 123 to 130 (FSVGSNVD), 137 to 145 (TIYGWAVLA), 150 to 158 (LAGYQMSFD), 163 to 175 (KLSQ…GYKA), 178 to 185 (FQLHTHVN), 189 to 198 (EFGGSIYQKV), 202 to 211 (IETSINLAWT), 218 to 227 (RFGIAAKYML), and 231 to 238 (TSLSAKVN). A Glycyl lysine isopeptide (Lys-Gly) (interchain with G-Cter in ubiquitin) cross-link involves residue Lys163. At Ser241 the chain carries Phosphoserine. Residues 242-244 (LIG) and 260-264 (SALID) contribute to the NAD(+) site. 2 beta stranded membrane-spanning segments follow: residues 242–251 (LIGLGYTQTL) and 254–263 (GVKLTLSALI). The residue at position 266 (Lys266) is an N6-acetyllysine; alternate. Residue Lys266 forms a Glycyl lysine isopeptide (Lys-Gly) (interchain with G-Cter in ubiquitin); alternate linkage. The chain crosses the membrane as a beta stranded span at residues 273-282 (HKVGLGFELE). Lys274 is covalently cross-linked (Glycyl lysine isopeptide (Lys-Gly) (interchain with G-Cter in ubiquitin)).

It belongs to the eukaryotic mitochondrial porin family. Interacts with ARMC12 in a TBC1D21-dependent manner. Interacts with MISFA. Ubiquitinated by PRKN during mitophagy, leading to its degradation and enhancement of mitophagy. Deubiquitinated by USP30. In terms of tissue distribution, expressed in erythrocytes (at protein level). Widely expressed. Highest in testis.

The protein localises to the mitochondrion outer membrane. It is found in the membrane. The enzyme catalyses chloride(in) = chloride(out). It catalyses the reaction K(+)(in) = K(+)(out). Non-selective voltage-gated ion channel that mediates the transport of anions and cations through the mitochondrion outer membrane and plasma membrane. Forms a high-conducting channel with a stable open state and a voltage-induced closure with a mild preference for anions over cations. Involved in male fertility and sperm mitochondrial sheath formation. This Homo sapiens (Human) protein is Non-selective voltage-gated ion channel VDAC3.